We begin with the raw amino-acid sequence, 169 residues long: Cytochrome c oxidase subunit 4 isoform 1, mitochondrial (169 aa).

Residues 1–22 (MLASRALSLIGKRAISTSVCLR) constitute a mitochondrion transit peptide. At 23–99 (AHGSVVKSED…FAEMNRGTNE (77 aa)) the chain is on the mitochondrial matrix side. Lysine 29 is subject to N6-acetyllysine; alternate. Lysine 29 is subject to N6-succinyllysine; alternate. Residues serine 56 and serine 58 each carry the phosphoserine modification. Residue lysine 60 is modified to N6-acetyllysine; alternate. The residue at position 60 (lysine 60) is an N6-succinyllysine; alternate. The residue at position 67 (lysine 67) is an N6-acetyllysine. A helical membrane pass occupies residues 100–125 (WKTVVGMAMFFIGFTALVLIWEKSYV). Topologically, residues 126–169 (YGPIPHTFDRDWVAMQTKRMLDMKANPIQGFSAKWDYDKNEWKK) are mitochondrial intermembrane.

It belongs to the cytochrome c oxidase IV family. In terms of assembly, component of the cytochrome c oxidase (complex IV, CIV), a multisubunit enzyme composed of 14 subunits. The complex is composed of a catalytic core of 3 subunits MT-CO1, MT-CO2 and MT-CO3, encoded in the mitochondrial DNA, and 11 supernumerary subunits COX4I, COX5A, COX5B, COX6A, COX6B, COX6C, COX7A, COX7B, COX7C, COX8 and NDUFA4, which are encoded in the nuclear genome. The complex exists as a monomer or a dimer and forms supercomplexes (SCs) in the inner mitochondrial membrane with NADH-ubiquinone oxidoreductase (complex I, CI) and ubiquinol-cytochrome c oxidoreductase (cytochrome b-c1 complex, complex III, CIII), resulting in different assemblies (supercomplex SCI(1)III(2)IV(1) and megacomplex MCI(2)III(2)IV(2)). Interacts with PHB2; the interaction decreases in absence of SPHK2. Interacts with AFG1L. Interacts with ABCB7; this interaction allows the regulation of cellular iron homeostasis and cellular reactive oxygen species (ROS) levels in cardiomyocytes. Interacts with FLVCR2; this interaction occurs in the absence of heme and is disrupted upon heme binding. Interacts with IRGC.

The protein resides in the mitochondrion inner membrane. It functions in the pathway energy metabolism; oxidative phosphorylation. Functionally, component of the cytochrome c oxidase, the last enzyme in the mitochondrial electron transport chain which drives oxidative phosphorylation. The respiratory chain contains 3 multisubunit complexes succinate dehydrogenase (complex II, CII), ubiquinol-cytochrome c oxidoreductase (cytochrome b-c1 complex, complex III, CIII) and cytochrome c oxidase (complex IV, CIV), that cooperate to transfer electrons derived from NADH and succinate to molecular oxygen, creating an electrochemical gradient over the inner membrane that drives transmembrane transport and the ATP synthase. Cytochrome c oxidase is the component of the respiratory chain that catalyzes the reduction of oxygen to water. Electrons originating from reduced cytochrome c in the intermembrane space (IMS) are transferred via the dinuclear copper A center (CU(A)) of subunit 2 and heme A of subunit 1 to the active site in subunit 1, a binuclear center (BNC) formed by heme A3 and copper B (CU(B)). The BNC reduces molecular oxygen to 2 water molecules using 4 electrons from cytochrome c in the IMS and 4 protons from the mitochondrial matrix. This chain is Cytochrome c oxidase subunit 4 isoform 1, mitochondrial (Cox4i1), found in Mus musculus (Mouse).